Reading from the N-terminus, the 239-residue chain is Tubulin beta-3 chain (239 aa).

Asn-22 provides a ligand contact to GTP. The disordered stretch occupies residues 207–239; it reads EESNMNDLVSEYQQYQDASAEPXXEQEEDYEEA. Residues 230–239 are compositionally biased toward acidic residues; sequence XEQEEDYEEA.

The protein belongs to the tubulin family. Dimer of alpha and beta chains. A typical microtubule is a hollow water-filled tube with an outer diameter of 25 nm and an inner diameter of 15 nM. Alpha-beta heterodimers associate head-to-tail to form protofilaments running lengthwise along the microtubule wall with the beta-tubulin subunit facing the microtubule plus end conferring a structural polarity. Microtubules usually have 13 protofilaments but different protofilament numbers can be found in some organisms and specialized cells. Requires Mg(2+) as cofactor.

The protein resides in the cytoplasm. It is found in the cytoskeleton. In terms of biological role, tubulin is the major constituent of microtubules, a cylinder consisting of laterally associated linear protofilaments composed of alpha- and beta-tubulin heterodimers. Microtubules grow by the addition of GTP-tubulin dimers to the microtubule end, where a stabilizing cap forms. Below the cap, tubulin dimers are in GDP-bound state, owing to GTPase activity of alpha-tubulin. In Anemia phyllitidis (Fern), this protein is Tubulin beta-3 chain (TUBB3).